The sequence spans 533 residues: Peptidyl-prolyl cis-trans isomerase-like 2 (533 aa).

Residues 38-111 (KRLPFYCCSL…DEYFCPVTYK (74 aa)) enclose the U-box domain. Residues 284–438 (KKSYARIITN…REIKIKQIQM (155 aa)) enclose the PPIase cyclophilin-type domain. A coiled-coil region spans residues 443–519 (FEEYQRRLKN…SNEGEELQKK (77 aa)). The span at 454–477 (LTHEANAERENEEMRKRREKEEKM) shows a compositional bias: basic and acidic residues. The tract at residues 454–533 (LTHEANAERE…KTTFGNFDNF (80 aa)) is disordered. The span at 523–533 (TKTTFGNFDNF) shows a compositional bias: polar residues.

Belongs to the cyclophilin-type PPIase family. PPIL2 subfamily.

The protein resides in the nucleus. The catalysed reaction is [protein]-peptidylproline (omega=180) = [protein]-peptidylproline (omega=0). It carries out the reaction S-ubiquitinyl-[E2 ubiquitin-conjugating enzyme]-L-cysteine + [acceptor protein]-L-lysine = [E2 ubiquitin-conjugating enzyme]-L-cysteine + N(6)-ubiquitinyl-[acceptor protein]-L-lysine.. It participates in protein modification; protein ubiquitination. In terms of biological role, may catalyze the cis-trans isomerization of proline imidic peptide bonds in oligopeptides thereby assisting the folding of proteins. May also function as a chaperone, playing a role in intracellular transport of proteins. May also have a protein ubiquitin ligase activity acting as an E3 ubiquitin protein ligase or as a ubiquitin-ubiquitin ligase promoting elongation of ubiquitin chains on proteins. In Rhizopus delemar (strain RA 99-880 / ATCC MYA-4621 / FGSC 9543 / NRRL 43880) (Mucormycosis agent), this protein is Peptidyl-prolyl cis-trans isomerase-like 2 (cyp14).